The sequence spans 438 residues: Phosphoribosylamine--glycine ligase (438 aa).

The ATP-grasp domain maps to 108–316; that stretch reads REFMERNNIP…LLEIAKGIVE (209 aa). Residue 135-194 coordinates ATP; it reads IDEYGKPVVVKPLGLTGGKGVKVVGYQLKDNEEAKEYAEHIIRKDGKVLIEERTDGVEFT. 3 residues coordinate Mg(2+): glutamine 274, glutamate 286, and asparagine 288. 3 residues coordinate Mn(2+): glutamine 274, glutamate 286, and asparagine 288.

It belongs to the GARS family. Requires Mg(2+) as cofactor. Mn(2+) serves as cofactor.

The enzyme catalyses 5-phospho-beta-D-ribosylamine + glycine + ATP = N(1)-(5-phospho-beta-D-ribosyl)glycinamide + ADP + phosphate + H(+). Its pathway is purine metabolism; IMP biosynthesis via de novo pathway; N(1)-(5-phospho-D-ribosyl)glycinamide from 5-phospho-alpha-D-ribose 1-diphosphate: step 2/2. The sequence is that of Phosphoribosylamine--glycine ligase from Pyrococcus horikoshii (strain ATCC 700860 / DSM 12428 / JCM 9974 / NBRC 100139 / OT-3).